Consider the following 512-residue polypeptide: Maturase K (512 aa).

It belongs to the intron maturase 2 family. MatK subfamily.

The protein resides in the plastid. It localises to the chloroplast. Functionally, usually encoded in the trnK tRNA gene intron. Probably assists in splicing its own and other chloroplast group II introns. The sequence is that of Maturase K from Oenothera glazioviana (Large-flowered evening primrose).